Here is a 355-residue protein sequence, read N- to C-terminus: Protein HGH1 homolog (355 aa).

The disordered stretch occupies residues 324–355 (DEEGDPTPEEIEQMNKKQKLEDEDAQFETDEI). Composition is skewed to acidic residues over residues 325–335 (EEGDPTPEEIE) and 344–355 (EDEDAQFETDEI).

Belongs to the HGH1 family.

In Dictyostelium discoideum (Social amoeba), this protein is Protein HGH1 homolog.